The following is a 228-amino-acid chain: Urease accessory protein UreF (228 aa).

Belongs to the UreF family. UreD, UreF and UreG form a complex that acts as a GTP-hydrolysis-dependent molecular chaperone, activating the urease apoprotein by helping to assemble the nickel containing metallocenter of UreC. The UreE protein probably delivers the nickel.

The protein resides in the cytoplasm. Functionally, required for maturation of urease via the functional incorporation of the urease nickel metallocenter. This Prochlorococcus marinus (strain MIT 9215) protein is Urease accessory protein UreF.